The following is a 328-amino-acid chain: Probable cell division protein WhiA (328 aa).

The segment at residues 275 to 308 (SLEELGQLHDPVLTKDAIAGRIRRLLAMADKRAE) is a DNA-binding region (H-T-H motif).

It belongs to the WhiA family.

In terms of biological role, involved in cell division and chromosome segregation. The chain is Probable cell division protein WhiA from Nocardioides sp. (strain ATCC BAA-499 / JS614).